The chain runs to 299 residues: UDP-N-acetylenolpyruvoylglucosamine reductase (299 aa).

Residues 27 to 192 (KSGGAADWLF…VGATFRGRPG (166 aa)) form the FAD-binding PCMH-type domain. Arg-172 is a catalytic residue. The segment at 206 to 225 (ASREASQPLRSRTGGSTFKN) is disordered. The span at 208 to 224 (REASQPLRSRTGGSTFK) shows a compositional bias: polar residues. Ser-221 serves as the catalytic Proton donor. Glu-291 is an active-site residue.

It belongs to the MurB family. FAD serves as cofactor.

It localises to the cytoplasm. The catalysed reaction is UDP-N-acetyl-alpha-D-muramate + NADP(+) = UDP-N-acetyl-3-O-(1-carboxyvinyl)-alpha-D-glucosamine + NADPH + H(+). It functions in the pathway cell wall biogenesis; peptidoglycan biosynthesis. In terms of biological role, cell wall formation. The polypeptide is UDP-N-acetylenolpyruvoylglucosamine reductase (Sphingopyxis alaskensis (strain DSM 13593 / LMG 18877 / RB2256) (Sphingomonas alaskensis)).